A 112-amino-acid chain; its full sequence is Nitrogen regulatory protein P-II (112 aa).

The residue at position 51 (Y51) is an O-UMP-tyrosine.

It belongs to the P(II) protein family. In terms of assembly, homotrimer.

Its function is as follows. In nitrogen-limiting conditions, when the ratio of Gln to 2-ketoglutarate decreases, P-II is uridylylated to P-II-UMP. P-II-UMP allows the deadenylation of glutamine synthetase (GS), thus activating the enzyme. Conversely, in nitrogen excess P-II is deuridylated and promotes the adenylation of GS. P-II indirectly controls the transcription of the GS gene (glnA). P-II prevents NR-II-catalyzed conversion of NR-I to NR-I-phosphate, the transcriptional activator of glnA. When P-II is uridylylated to P-II-UMP, these events are reversed. This chain is Nitrogen regulatory protein P-II (glnB), found in Mesorhizobium japonicum (strain LMG 29417 / CECT 9101 / MAFF 303099) (Mesorhizobium loti (strain MAFF 303099)).